Here is a 225-residue protein sequence, read N- to C-terminus: Urease subunit alpha (225 aa).

A urease gamma region spans residues 1–102 (MRLTPKELDK…LVTIHNPIED (102 aa)). The interval 103-225 (NGKLTPGEYI…ANAAQKHFIH (123 aa)) is urease beta.

It in the N-terminal section; belongs to the urease gamma subunit family. The protein in the C-terminal section; belongs to the urease beta subunit family. As to quaternary structure, heterohexamer of 3 UreA (alpha) and 3 UreB (beta) subunits.

Its subcellular location is the cytoplasm. The enzyme catalyses urea + 2 H2O + H(+) = hydrogencarbonate + 2 NH4(+). Its pathway is nitrogen metabolism; urea degradation; CO(2) and NH(3) from urea (urease route): step 1/1. The polypeptide is Urease subunit alpha (Helicobacter hepaticus (strain ATCC 51449 / 3B1)).